Consider the following 291-residue polypeptide: Protease HtpX (291 aa).

Helical transmembrane passes span 4 to 24 (ILLF…TLKL) and 36 to 56 (GSLL…SLFI). Position 142 (histidine 142) interacts with Zn(2+). Glutamate 143 is an active-site residue. Zn(2+) is bound at residue histidine 146. 2 helical membrane-spanning segments follow: residues 150–170 (GDMV…MFFA) and 193–213 (FVAT…IVMW). Residue glutamate 219 participates in Zn(2+) binding.

This sequence belongs to the peptidase M48B family. It depends on Zn(2+) as a cofactor.

The protein resides in the cell inner membrane. The sequence is that of Protease HtpX from Pseudomonas aeruginosa (strain LESB58).